The primary structure comprises 75 residues: Small ribosomal subunit protein bS18 (75 aa).

This sequence belongs to the bacterial ribosomal protein bS18 family. In terms of assembly, part of the 30S ribosomal subunit. Forms a tight heterodimer with protein bS6.

Functionally, binds as a heterodimer with protein bS6 to the central domain of the 16S rRNA, where it helps stabilize the platform of the 30S subunit. The chain is Small ribosomal subunit protein bS18 from Shewanella denitrificans (strain OS217 / ATCC BAA-1090 / DSM 15013).